Consider the following 270-residue polypeptide: Tryptophan synthase alpha chain (270 aa).

Catalysis depends on proton acceptor residues Glu49 and Asp60.

Belongs to the TrpA family. In terms of assembly, tetramer of two alpha and two beta chains.

It carries out the reaction (1S,2R)-1-C-(indol-3-yl)glycerol 3-phosphate + L-serine = D-glyceraldehyde 3-phosphate + L-tryptophan + H2O. Its pathway is amino-acid biosynthesis; L-tryptophan biosynthesis; L-tryptophan from chorismate: step 5/5. Its function is as follows. The alpha subunit is responsible for the aldol cleavage of indoleglycerol phosphate to indole and glyceraldehyde 3-phosphate. This chain is Tryptophan synthase alpha chain, found in Pseudomonas fluorescens (strain ATCC BAA-477 / NRRL B-23932 / Pf-5).